The chain runs to 456 residues: Bifunctional protein GlmU (456 aa).

The tract at residues 1 to 228 is pyrophosphorylase; sequence MPQNTLNIVI…SHLAAGVNNK (228 aa). UDP-N-acetyl-alpha-D-glucosamine is bound by residues 11-14, Lys25, Gln75, 80-81, 102-104, Gly138, Glu153, Asn168, and Asn226; these read LAAG, GT, and YGD. Position 104 (Asp104) interacts with Mg(2+). Position 226 (Asn226) interacts with Mg(2+). Positions 229–249 are linker; that stretch reads LQLAELERIFQTGQAQELLKA. The interval 250-456 is N-acetyltransferase; it reads GVTLHDPARF…GWVRPEKDKQ (207 aa). Arg332 and Lys350 together coordinate UDP-N-acetyl-alpha-D-glucosamine. The Proton acceptor role is filled by His362. Residues Tyr365 and Asn376 each contribute to the UDP-N-acetyl-alpha-D-glucosamine site. Acetyl-CoA-binding positions include Ala379, 385–386, Ser404, Ala422, and Arg439; that span reads NY.

This sequence in the N-terminal section; belongs to the N-acetylglucosamine-1-phosphate uridyltransferase family. In the C-terminal section; belongs to the transferase hexapeptide repeat family. Homotrimer. Requires Mg(2+) as cofactor.

It localises to the cytoplasm. The enzyme catalyses alpha-D-glucosamine 1-phosphate + acetyl-CoA = N-acetyl-alpha-D-glucosamine 1-phosphate + CoA + H(+). It carries out the reaction N-acetyl-alpha-D-glucosamine 1-phosphate + UTP + H(+) = UDP-N-acetyl-alpha-D-glucosamine + diphosphate. Its pathway is nucleotide-sugar biosynthesis; UDP-N-acetyl-alpha-D-glucosamine biosynthesis; N-acetyl-alpha-D-glucosamine 1-phosphate from alpha-D-glucosamine 6-phosphate (route II): step 2/2. The protein operates within nucleotide-sugar biosynthesis; UDP-N-acetyl-alpha-D-glucosamine biosynthesis; UDP-N-acetyl-alpha-D-glucosamine from N-acetyl-alpha-D-glucosamine 1-phosphate: step 1/1. It functions in the pathway bacterial outer membrane biogenesis; LPS lipid A biosynthesis. Functionally, catalyzes the last two sequential reactions in the de novo biosynthetic pathway for UDP-N-acetylglucosamine (UDP-GlcNAc). The C-terminal domain catalyzes the transfer of acetyl group from acetyl coenzyme A to glucosamine-1-phosphate (GlcN-1-P) to produce N-acetylglucosamine-1-phosphate (GlcNAc-1-P), which is converted into UDP-GlcNAc by the transfer of uridine 5-monophosphate (from uridine 5-triphosphate), a reaction catalyzed by the N-terminal domain. The protein is Bifunctional protein GlmU of Neisseria meningitidis serogroup C (strain 053442).